A 435-amino-acid chain; its full sequence is tRNA(Ile)-lysidine synthase (435 aa).

An ATP-binding site is contributed by 25 to 30; that stretch reads SGGLDS.

Belongs to the tRNA(Ile)-lysidine synthase family.

It is found in the cytoplasm. It carries out the reaction cytidine(34) in tRNA(Ile2) + L-lysine + ATP = lysidine(34) in tRNA(Ile2) + AMP + diphosphate + H(+). Its function is as follows. Ligates lysine onto the cytidine present at position 34 of the AUA codon-specific tRNA(Ile) that contains the anticodon CAU, in an ATP-dependent manner. Cytidine is converted to lysidine, thus changing the amino acid specificity of the tRNA from methionine to isoleucine. The chain is tRNA(Ile)-lysidine synthase from Photobacterium profundum (strain SS9).